The sequence spans 461 residues: Serine/threonine-protein kinase 4 homolog A (461 aa).

A Protein kinase domain is found at 20-273; the sequence is FTIVEKLGEG…AEELLKHPFI (254 aa). ATP-binding positions include 26–34 and Lys-49; that span reads LGEGSYGSV. Asp-139 acts as the Proton acceptor in catalysis. Phosphothreonine; by autocatalysis is present on Thr-173. Disordered stretches follow at residues 303-349 and 369-388; these read GIEQ…EEYD and NDDEDSGTMKLKNTMPSNKK. A compositionally biased stretch (acidic residues) spans 307–322; it reads RDEEEEDEDEDSEDSD. In terms of domain architecture, SARAH spans 411–458; it reads SDKYSSYSLEELKKMLAELEIEREKEVQKTLEKFSINRQALLAVIDEK.

It belongs to the protein kinase superfamily. STE Ser/Thr protein kinase family. STE20 subfamily. The cofactor is Mn(2+). In terms of processing, undergoes autophosphorylation in the catalytic domain.

The protein resides in the cytoplasm. Its subcellular location is the cytosol. It catalyses the reaction L-seryl-[protein] + ATP = O-phospho-L-seryl-[protein] + ADP + H(+). It carries out the reaction L-threonyl-[protein] + ATP = O-phospho-L-threonyl-[protein] + ADP + H(+). Its function is as follows. Regulates both cAMP signaling during early development and the stress response. Functions as an activator of adenylylcyclase. This chain is Serine/threonine-protein kinase 4 homolog A (krsA), found in Dictyostelium discoideum (Social amoeba).